We begin with the raw amino-acid sequence, 178 residues long: Caveolin-1 (178 aa).

N-acetylserine is present on S2. S2 is subject to Phosphoserine. The interval 2 to 94 is required for homooligomerization; that stretch reads SGGKYVDSEG…WKASFTTFTV (93 aa). Residues 2–104 lie on the Cytoplasmic side of the membrane; that stretch reads SGGKYVDSEG…TKYWFYRLLS (103 aa). K5 is subject to N6-acetyllysine; alternate. K5 is covalently cross-linked (Glycyl lysine isopeptide (Lys-Gly) (interchain with G-Cter in ubiquitin); alternate). Y6 is modified (phosphotyrosine). At S9 the chain carries Phosphoserine. Residue Y14 is modified to Phosphotyrosine; by ABL1. Position 25 is a phosphotyrosine (Y25). Residues K26 and K30 each participate in a glycyl lysine isopeptide (Lys-Gly) (interchain with G-Cter in ubiquitin) cross-link. Position 37 is a phosphoserine (S37). Glycyl lysine isopeptide (Lys-Gly) (interchain with G-Cter in ubiquitin) cross-links involve residues K39, K47, and K57. The interval 82-94 is interaction with CAVIN3; that stretch reads DGIWKASFTTFTV. Residues 105–125 constitute an intramembrane region (helical); sequence ALFGIPMALIWGIYFAILSFL. Residues 126-178 lie on the Cytoplasmic side of the membrane; it reads HIWAVVPCIKSFLIEIQCISRVYSIYIHTVCDPLFEAIGKIFSNVRIGLQKEI. The tract at residues 131–142 is interacts with SPRY1, SPRY2, SPRY3 and SPRY4; it reads VPCIKSFLIEIQ. Residues C133, C143, and C156 are each lipidated (S-palmitoyl cysteine). Residues 149–160 are interacts with SPRY1, SPRY2, and SPRY4; that stretch reads SIYIHTVCDPLF. The interval 167-178 is interacts with SPRY1, SPRY2, SPRY3 and SPRY4; sequence FSNVRIGLQKEI.

Belongs to the caveolin family. In terms of assembly, homooligomer. Interacts with GLIPR2. Interacts with NOSTRIN. Interacts with SNAP25 and STX1A. Interacts (via the N-terminus) with DPP4; the interaction is direct. Interacts with CTNNB1, CDH1 and JUP. Interacts with PACSIN2; this interaction induces membrane tubulation. Interacts with SLC7A9. Interacts with BMX and BTK. Interacts with TGFBR1. Interacts with CAVIN3 (via leucine-zipper domain) in a cholesterol-sensitive manner. Interacts with CAVIN1. Interacts with EHD2 in a cholesterol-dependent manner. Forms a ternary complex with UBXN6 and VCP; mediates CAV1 targeting to lysosomes for degradation. Interacts with ABCG1; this interaction regulates ABCG1-mediated cholesterol efflux. Interacts with NEU3; this interaction enhances NEU3 sialidase activity within caveola. Interacts (via C-terminus) with SPRY1, SPRY2 (via C-terminus), SPRY3, and SPRY4. Interacts with IGFBP5; this interaction allows trafficking of IGFBP5 from the plasma membrane to the nucleus. Post-translationally, phosphorylated at Tyr-14 by ABL1 in response to oxidative stress. Ubiquitinated. Undergo monoubiquitination and multi- and/or polyubiquitination. Monoubiquitination of N-terminal lysines promotes integration in a ternary complex with UBXN6 and VCP which promotes oligomeric CAV1 targeting to lysosomes for degradation. Ubiquitinated by ZNRF1; leading to degradation and modulation of the TLR4-mediated immune response.

Its subcellular location is the golgi apparatus membrane. It is found in the cell membrane. The protein localises to the membrane. The protein resides in the caveola. It localises to the membrane raft. Its function is as follows. May act as a scaffolding protein within caveolar membranes. Forms a stable heterooligomeric complex with CAV2 that targets to lipid rafts and drives caveolae formation. Mediates the recruitment of CAVIN proteins (CAVIN1/2/3/4) to the caveolae. Interacts directly with G-protein alpha subunits and can functionally regulate their activity. Involved in the costimulatory signal essential for T-cell receptor (TCR)-mediated T-cell activation. Its binding to DPP4 induces T-cell proliferation and NF-kappa-B activation in a T-cell receptor/CD3-dependent manner. Recruits CTNNB1 to caveolar membranes and may regulate CTNNB1-mediated signaling through the Wnt pathway. Negatively regulates TGFB1-mediated activation of SMAD2/3 by mediating the internalization of TGFBR1 from membrane rafts leading to its subsequent degradation. Binds 20(S)-hydroxycholesterol (20(S)-OHC). This is Caveolin-1 (CAV1) from Saimiri boliviensis boliviensis (Bolivian squirrel monkey).